The sequence spans 1809 residues: Proprotein convertase subtilisin/kexin type 5 (1809 aa).

A signal peptide spans 1–34; the sequence is MDWGWGSRCCRPGRRDLLCVLALLAGCLLPVCRT. The propeptide occupies 35–116; that stretch reads RVYTNHWAVK…QQVVKKRTKR (82 aa). The Extracellular segment spans residues 117–1700; that stretch reads DYDLSRAQST…DTVFHEHTKT (1584 aa). Positions 136-455 constitute a Peptidase S8 domain; the sequence is MWYMHCSDNT…FGLMDAEAMV (320 aa). Catalysis depends on charge relay system residues Asp173 and His214. Asn227 and Asn383 each carry an N-linked (GlcNAc...) asparagine glycan. The active-site Charge relay system is the Ser388. One can recognise a P/Homo B domain in the interval 463-603; it reads TVPQQHVCVE…SLVLYGTSVQ (141 aa). The Cell attachment site signature appears at 521–523; sequence RGD. FU repeat units lie at residues 632-682, 685-732, 736-779, 781-826, 834-881, 884-929, 931-964, 965-1010, 1012-1054, 1058-1099, 1137-1179, 1183-1230, 1232-1276, 1278-1321, 1323-1369, 1373-1418, 1422-1467, 1471-1516, 1520-1567, 1571-1616, and 1622-1669; these read EDYA…GHFH, KKRC…GSYQ, KNIC…GQFF, GHDC…SYYL, YKSC…GEYI, QGHC…WKFE, KKQCHPCHHTCQGCQGSGPSNCTSCKAGEFQDSE, YGEC…KTFG, KWEC…GFYG, LGEC…PTWP, TRQY…GTWL, SSSC…GFYA, DGVC…KHVA, EGVC…NFYP, MRQC…GTYK, NDEC…IEYW, SHRC…GYHT, SHQC…GYYG, SGRC…HYYA, AQTC…GEYR, and NFNC…SHPH. Positions 638–1685 are CRM (Cys-rich motif); it reads CDPECSEVGC…DCQSSTDECI (1048 aa). Residue Asn667 is glycosylated (N-linked (GlcNAc...) asparagine). N-linked (GlcNAc...) asparagine glycosylation is found at Asn754, Asn804, and Asn854. N-linked (GlcNAc...) asparagine glycans are attached at residues Asn1642 and Asn1664. Residues 1701–1721 traverse the membrane as a helical segment; sequence ALLVTSGAMLLLLLGAAVVVW. The Cytoplasmic segment spans residues 1722–1809; it reads RKSRSQPVAK…EYDDESYSYQ (88 aa). AC regions lie at residues 1757 to 1776 and 1788 to 1809; these read VIEYRDRDYDEDDEDDIVYM and YGLLDEAEDDELEYDDESYSYQ.

The protein belongs to the peptidase S8 family. Expressed in the intestine, brain, adrenal gland, anterior pituitary, thyroid, ovaries, testis and lung. Highest levels are found in the gut, duodenum, jejunum and ileum. Expression is higher in female than in male reproductive organs.

The protein resides in the secreted. It is found in the endomembrane system. Its function is as follows. Serine endoprotease that processes various proproteins by cleavage at paired basic amino acids, recognizing the RXXX[KR]R consensus motif. Likely functions in the constitutive and regulated secretory pathways. Plays an essential role in pregnancy establishment by proteolytic activation of a number of important factors such as BMP2, CALD1 and alpha-integrins. May be responsible for the maturation of gastrointestinal peptides. May be involved in the cellular proliferation of adrenal cortex via the activation of growth factors. This chain is Proprotein convertase subtilisin/kexin type 5 (Pcsk5), found in Rattus norvegicus (Rat).